The following is a 106-amino-acid chain: Large ribosomal subunit protein uL24 (106 aa).

It belongs to the universal ribosomal protein uL24 family. As to quaternary structure, part of the 50S ribosomal subunit.

Its function is as follows. One of two assembly initiator proteins, it binds directly to the 5'-end of the 23S rRNA, where it nucleates assembly of the 50S subunit. One of the proteins that surrounds the polypeptide exit tunnel on the outside of the subunit. The chain is Large ribosomal subunit protein uL24 from Spiroplasma kunkelii.